We begin with the raw amino-acid sequence, 144 residues long: Transcriptional regulator SlyA (144 aa).

Positions 2–135 constitute an HTH marR-type domain; it reads ESSLGSDLAR…LNNIIAKLER (134 aa). A DNA-binding region (H-T-H motif) is located at residues 49–72; the sequence is QIQLAKAIGIEQPSLVRTLDQLES.

This sequence belongs to the SlyA family. Homodimer.

Transcription regulator that can specifically activate or repress expression of target genes. The protein is Transcriptional regulator SlyA of Blochmanniella floridana.